A 7214-amino-acid polypeptide reads, in one-letter code: Nonribosomal peptide synthetase atnA (7214 aa).

The tract at residues 257 to 651 (ERKALEQPHA…VGRKDTQVKI (395 aa)) is adenylation 1. The region spanning 786-862 (EPVTETEKAV…AMSQIAVELS (77 aa)) is the Carrier 1 domain. Ser-823 carries the post-translational modification O-(pantetheine 4'-phosphoryl)serine. Positions 899–1318 (EDAYPATALQ…LVSQKDYTQI (420 aa)) are condensation 1. The interval 1340 to 1735 (QVLATPDAPA…ARKDTQAKVR (396 aa)) is adenylation 2. The region spanning 1877–1953 (QPTSDIEKKV…ALAGRAQYIE (77 aa)) is the Carrier 2 domain. An O-(pantetheine 4'-phosphoryl)serine modification is found at Ser-1914. Positions 1962 to 2384 (PEAEVIDEWF…RQVLETGIDE (423 aa)) are epimerization. The condensation 2 stretch occupies residues 2431–2845 (SPCSPMQLGL…MLSPLDRASL (415 aa)). Residues 2866–3262 (QNARKRPHAL…VGRKDTQVKV (397 aa)) form an adenylation 3 region. Residues 3398-3472 (ALETPMEETI…DMARIVVAAY (75 aa)) enclose the Carrier 3 domain. At Ser-3433 the chain carries O-(pantetheine 4'-phosphoryl)serine. The interval 3510-3904 (VEDVYPSTSL…QLCENEDGRL (395 aa)) is condensation 3. The segment at 3943–4339 (ERARLHPDLL…VGRKDSQVKL (397 aa)) is adenylation 4. The 77-residue stretch at 4476-4552 (VPGSEAEKVI…ELAGRVTSIS (77 aa)) folds into the Carrier 4 domain. O-(pantetheine 4'-phosphoryl)serine is present on Ser-4513. A condensation 4 region spans residues 4601–5033 (VEDVYPCSPL…TSAAMRAQLL (433 aa)). The interval 5051 to 5446 (FHRTALRYPE…VGRKDTQIKF (396 aa)) is adenylation 5. The interval 5489 to 5515 (FITTEGGSGHENKGSPSLKGSSGDPVS) is disordered. One can recognise a Carrier 5 domain in the interval 5591–5667 (APRTAMEKRL…QMANIVARNA (77 aa)). Ser-5628 carries the O-(pantetheine 4'-phosphoryl)serine modification. Residues 5707–6123 (QDVYPCTPLQ…HLLGDNEIKM (417 aa)) form a condensation 5 region. The interval 6145–6543 (ERAVLQPEAI…GRKDTQIKLR (399 aa)) is adenylation 6. A Carrier 6 domain is found at 6683–6766 (DPADKLALAL…DVARMIEHGN (84 aa)). At Ser-6725 the chain carries O-(pantetheine 4'-phosphoryl)serine. Residues 6814–7194 (ILLTGATGFL…KSISYMRQIG (381 aa)) form a thioesterase (TE) domain region. The disordered stretch occupies residues 6895-6915 (STVEGRDHPGSESGSTAGPAE).

The protein belongs to the NRP synthetase family.

Its pathway is secondary metabolite biosynthesis. Its function is as follows. Nonribosomal peptide synthetase; part of the gene cluster that mediates the biosynthesis of aspercryptins, linear lipopeptides built from six amino acids including 2 highly unusual and nonproteogenic amino acids, 2-amino-octanoic acid (2aoa) and 2-amino-dodecanol (2adol). The core structure of aspercryptins is as follows: Ser/Ala-Thr-Ile/Val-2aoa-Asn-2adol. The first step of aspercryptin biosynthesis is the generation of the fatty acid precursors, octanoic and dodecanoic acids, by the FAS subunits atnF and atnM. The fatty acid precursors are likely transformed into the corresponding alpha-amino fatty acids in three steps. First, they are hydroxylated by the cytochrome P450 monooxygenase atnE, then oxidized to the corresponding alpha-keto acids by the NAD(P)-dependent oxidoreductase atnD, and finally converted to the alpha-amino fatty acids by the PLP-dependent aminotransferases atnH or atnJ. the alpha-amino fatty acids, 2-amino-octanoic and 2-amino-dodecanoic acids, are recognized, activated, and covalently tethered to the NRPS atnA by its fourth and sixth adenylation domains. The second module of atnA is the Thr module and contains an epimerase (E) domain responsible for the epimerization of Thr to D-allo-Thr. Additionally, despite atnA having only one epimerase domain, the first amino acid of aspercryptin A1 is D-Ser, suggesting that serine is either loaded directly as D-Ser on the first module or that the epimerase domain in the threonine module epimerizes both L-Ser and L-Thr. After condensation of the hexapeptide of aspercryptin, the C-terminal reductase (TE) domain might be involved in the reductive release and production of the aldehyde hexapeptide. Further reduction would generate aspercryptins. The variety of aspercryptins produced reflects the flexibility of the atnA NRPS, allowing incorporation of alanine instead of serine, valine for isoleucine, and a C10 fatty amino alcohol instead of the C12 version. AtnB seems to be involved in the selectivity for Ile versus Val by the third module. Moreover, type B, C and D aspercryptins have an additional N-terminal cichorine, acetyl and propionyl group respectively. The chain is Nonribosomal peptide synthetase atnA from Emericella nidulans (strain FGSC A4 / ATCC 38163 / CBS 112.46 / NRRL 194 / M139) (Aspergillus nidulans).